The following is an 82-amino-acid chain: MAAGSTGERPFFEIITSIRYWVIHAITLPSIFLAGFLFVSTGLAYDAFGTPRPDAYFQASESKAPVVSQRYEGKSELDLRLK.

A helical transmembrane segment spans residues 22–36 (VIHAITLPSIFLAGF). H24 lines the heme pocket.

It belongs to the PsbE/PsbF family. As to quaternary structure, heterodimer of an alpha subunit and a beta subunit. PSII is composed of 1 copy each of membrane proteins PsbA, PsbB, PsbC, PsbD, PsbE, PsbF, PsbH, PsbI, PsbJ, PsbK, PsbL, PsbM, PsbT, PsbX, PsbY, PsbZ, Psb30/Ycf12, peripheral proteins PsbO, CyanoQ (PsbQ), PsbU, PsbV and a large number of cofactors. It forms dimeric complexes. The cofactor is heme b.

It localises to the cellular thylakoid membrane. In terms of biological role, this b-type cytochrome is tightly associated with the reaction center of photosystem II (PSII). PSII is a light-driven water:plastoquinone oxidoreductase that uses light energy to abstract electrons from H(2)O, generating O(2) and a proton gradient subsequently used for ATP formation. It consists of a core antenna complex that captures photons, and an electron transfer chain that converts photonic excitation into a charge separation. The protein is Cytochrome b559 subunit alpha of Synechococcus sp. (strain CC9311).